A 509-amino-acid polypeptide reads, in one-letter code: Cytochrome P450 4X1 (509 aa).

A helical membrane pass occupies residues 14–34; it reads FYLAFVFCLALGLLQAIKLYL. C454 contacts heme.

Belongs to the cytochrome P450 family. The cofactor is heme. Expressed in brain, heart, kidney and skin and, at lower levels, in skeletal muscle and liver. In the brain, high levels are detected in amygdala and lower levels in globus pallidus and cerebellum. In the heart, very high levels in aorta, but very low levels in other heart regions. Also expressed in breast, prostate and colon.

Its subcellular location is the endoplasmic reticulum membrane. It is found in the microsome membrane. It catalyses the reaction N-(5Z,8Z,11Z,14Z-eicosatetraenoyl)-ethanolamine + reduced [NADPH--hemoprotein reductase] + O2 = N-(14,15-epoxy-5Z,8Z,11Z-eicosatrienoyl)-ethanolamine + oxidized [NADPH--hemoprotein reductase] + H2O + H(+). Its function is as follows. A cytochrome P450 monooxygenase that selectively catalyzes the epoxidation of the last double bond of the arachidonoyl moiety of anandamide, potentially modulating endocannabinoid signaling. Has no hydroxylase activity toward various fatty acids, steroids and prostaglandins. Mechanistically, uses molecular oxygen inserting one oxygen atom into a substrate, and reducing the second into a water molecule, with two electrons provided by NADPH via cytochrome P450 reductase (CPR; NADPH-ferrihemoprotein reductase). The sequence is that of Cytochrome P450 4X1 from Homo sapiens (Human).